A 415-amino-acid polypeptide reads, in one-letter code: WD repeat-containing protein JIP5 (415 aa).

WD repeat units follow at residues Asp-5–Ala-44, Ala-104–Glu-142, Gln-145–Phe-184, Asp-189–Val-228, and Gly-233–Asp-282. The tract at residues Gly-328–Leu-415 is disordered. A compositionally biased stretch (acidic residues) spans Glu-337–Asp-346. Residues Asp-358–Glu-367 show a composition bias toward low complexity. Residues Glu-390–Ile-405 are compositionally biased toward basic and acidic residues.

The protein belongs to the WD repeat WDR55 family.

It is found in the nucleus. Its subcellular location is the nucleolus. This is WD repeat-containing protein JIP5 (JIP5) from Laccaria bicolor (strain S238N-H82 / ATCC MYA-4686) (Bicoloured deceiver).